We begin with the raw amino-acid sequence, 221 residues long: Imidazole glycerol phosphate synthase subunit HisH (221 aa).

The region spanning 9–221 (DVVIIDTGCA…QILGNFLKMQ (213 aa)) is the Glutamine amidotransferase type-1 domain. C84 acts as the Nucleophile in catalysis. Catalysis depends on residues H202 and E204.

Heterodimer of HisH and HisF.

The protein localises to the cytoplasm. The catalysed reaction is 5-[(5-phospho-1-deoxy-D-ribulos-1-ylimino)methylamino]-1-(5-phospho-beta-D-ribosyl)imidazole-4-carboxamide + L-glutamine = D-erythro-1-(imidazol-4-yl)glycerol 3-phosphate + 5-amino-1-(5-phospho-beta-D-ribosyl)imidazole-4-carboxamide + L-glutamate + H(+). It catalyses the reaction L-glutamine + H2O = L-glutamate + NH4(+). It participates in amino-acid biosynthesis; L-histidine biosynthesis; L-histidine from 5-phospho-alpha-D-ribose 1-diphosphate: step 5/9. Its function is as follows. IGPS catalyzes the conversion of PRFAR and glutamine to IGP, AICAR and glutamate. The HisH subunit catalyzes the hydrolysis of glutamine to glutamate and ammonia as part of the synthesis of IGP and AICAR. The resulting ammonia molecule is channeled to the active site of HisF. This Shewanella oneidensis (strain ATCC 700550 / JCM 31522 / CIP 106686 / LMG 19005 / NCIMB 14063 / MR-1) protein is Imidazole glycerol phosphate synthase subunit HisH.